The sequence spans 35 residues: UPF0387 membrane protein YohO (35 aa).

Residues 6–26 (IGVIALFLLMAIGGIGGVMLA) traverse the membrane as a helical segment.

This sequence belongs to the UPF0387 family.

It is found in the cell inner membrane. This is UPF0387 membrane protein YohO from Salmonella paratyphi A (strain ATCC 9150 / SARB42).